The following is a 155-amino-acid chain: Cyanate hydratase (155 aa).

Active-site residues include R101, E104, and S127.

The protein belongs to the cyanase family.

It catalyses the reaction cyanate + hydrogencarbonate + 3 H(+) = NH4(+) + 2 CO2. Catalyzes the reaction of cyanate with bicarbonate to produce ammonia and carbon dioxide. This Coccidioides posadasii (strain C735) (Valley fever fungus) protein is Cyanate hydratase.